Consider the following 546-residue polypeptide: Delta-1-pyrroline-5-carboxylate dehydrogenase (546 aa).

An NAD(+)-binding site is contributed by 279-284; the sequence is KDISSN. Glu-297 functions as the Proton acceptor in the catalytic mechanism. The Nucleophile role is filled by Cys-331.

It belongs to the aldehyde dehydrogenase family.

It localises to the cytoplasm. The enzyme catalyses L-glutamate 5-semialdehyde + NAD(+) + H2O = L-glutamate + NADH + 2 H(+). It participates in amino-acid degradation; L-proline degradation into L-glutamate; L-glutamate from L-proline: step 2/2. This chain is Delta-1-pyrroline-5-carboxylate dehydrogenase (pruA), found in Agaricus bisporus (White button mushroom).